Here is a 138-residue protein sequence, read N- to C-terminus: Large ribosomal subunit protein uL16 (138 aa).

The segment covering 1–19 (MLIPKRVKYRRQHRPHRSG) has biased composition (basic residues). The tract at residues 1–24 (MLIPKRVKYRRQHRPHRSGVSKGG) is disordered.

Belongs to the universal ribosomal protein uL16 family. In terms of assembly, part of the 50S ribosomal subunit.

Functionally, binds 23S rRNA and is also seen to make contacts with the A and possibly P site tRNAs. This chain is Large ribosomal subunit protein uL16, found in Corynebacterium diphtheriae (strain ATCC 700971 / NCTC 13129 / Biotype gravis).